A 254-amino-acid chain; its full sequence is MARGSAAAAIAGVVWVLLLLVGVASGARLPGGSGGNRGREPRGGAAAAAVATETAVFALGSFWRSEAAFGCLPGVIRTSVGYAGGSKARPEYRNLGDHAECVKVEYDPRLIQYKKLLEVFWASHDPREVFGQGPDVGNQYRSIIFTNGSVEARLAGLSKEKEQAKDRRSVITTQIQPIGAFYPAEPEHQKFELKRKPFLLQLIGNLPEEELLTSTLAAKLNAYAAELCSPNTQNRINSKIDEIAKKGWPILRDI.

The first 26 residues, 1–26, serve as a signal peptide directing secretion; the sequence is MARGSAAAAIAGVVWVLLLLVGVASG.

It belongs to the MsrA Met sulfoxide reductase family.

It carries out the reaction L-methionyl-[protein] + [thioredoxin]-disulfide + H2O = L-methionyl-(S)-S-oxide-[protein] + [thioredoxin]-dithiol. It catalyses the reaction [thioredoxin]-disulfide + L-methionine + H2O = L-methionine (S)-S-oxide + [thioredoxin]-dithiol. Functionally, catalyzes the reduction of methionine sulfoxide (MetSO) to methionine in proteins. Plays a protective role against oxidative stress by restoring activity to proteins that have been inactivated by methionine oxidation. MSRA family specifically reduces the MetSO S-enantiomer. The polypeptide is Peptide methionine sulfoxide reductase A5 (MSRA5) (Oryza sativa subsp. japonica (Rice)).